The sequence spans 698 residues: DNA ligase (698 aa).

NAD(+) contacts are provided by residues 40-44, 89-90, and Glu-123; these read DGEYD and SL. Catalysis depends on Lys-125, which acts as the N6-AMP-lysine intermediate. Residues Arg-146, Glu-184, Lys-300, and Lys-324 each contribute to the NAD(+) site. 4 residues coordinate Zn(2+): Cys-418, Cys-421, Cys-436, and Cys-442. Positions 620–698 constitute a BRCT domain; that stretch reads AGDSPLAGKT…EAEFRAMSGG (79 aa).

The protein belongs to the NAD-dependent DNA ligase family. LigA subfamily. The cofactor is Mg(2+). Mn(2+) is required as a cofactor.

The catalysed reaction is NAD(+) + (deoxyribonucleotide)n-3'-hydroxyl + 5'-phospho-(deoxyribonucleotide)m = (deoxyribonucleotide)n+m + AMP + beta-nicotinamide D-nucleotide.. Its function is as follows. DNA ligase that catalyzes the formation of phosphodiester linkages between 5'-phosphoryl and 3'-hydroxyl groups in double-stranded DNA using NAD as a coenzyme and as the energy source for the reaction. It is essential for DNA replication and repair of damaged DNA. The polypeptide is DNA ligase (Rhodospirillum rubrum (strain ATCC 11170 / ATH 1.1.1 / DSM 467 / LMG 4362 / NCIMB 8255 / S1)).